The sequence spans 274 residues: Thiamine kinase (274 aa).

This sequence belongs to the thiamine kinase family.

It carries out the reaction thiamine + ATP = thiamine phosphate + ADP + H(+). It functions in the pathway cofactor biosynthesis; thiamine diphosphate biosynthesis; thiamine phosphate from thiamine: step 1/1. Its function is as follows. Catalyzes the ATP-dependent phosphorylation of thiamine to thiamine phosphate. Is involved in thiamine salvage. The chain is Thiamine kinase from Shigella sonnei (strain Ss046).